We begin with the raw amino-acid sequence, 166 residues long: Small ribosomal subunit protein uS5 (166 aa).

The S5 DRBM domain maps to 11-74 (LEDRVVAINR…EDAKKNLVEV (64 aa)).

The protein belongs to the universal ribosomal protein uS5 family. As to quaternary structure, part of the 30S ribosomal subunit. Contacts proteins S4 and S8.

In terms of biological role, with S4 and S12 plays an important role in translational accuracy. Located at the back of the 30S subunit body where it stabilizes the conformation of the head with respect to the body. The sequence is that of Small ribosomal subunit protein uS5 from Enterococcus faecalis (strain ATCC 700802 / V583).